The following is a 147-amino-acid chain: Mannitol-specific cryptic phosphotransferase enzyme IIA component (147 aa).

The PTS EIIA type-2 domain maps to 5–147 (DYFPESSISV…KQLADIISRG (143 aa)). Residue His-67 is the Tele-phosphohistidine intermediate of the active site. His-67 bears the Phosphohistidine; by HPr mark.

Its subcellular location is the cytoplasm. The phosphoenolpyruvate-dependent sugar phosphotransferase system (sugar PTS), a major carbohydrate active transport system, catalyzes the phosphorylation of incoming sugar substrates concomitantly with their translocation across the cell membrane. The enzyme II CmtAB PTS system is involved in D-mannitol transport. The sequence is that of Mannitol-specific cryptic phosphotransferase enzyme IIA component (cmtB) from Escherichia coli O157:H7.